The chain runs to 724 residues: Acyl-coenzyme A oxidase 2 (724 aa).

The disordered stretch occupies residues 1–48 (MAMLSQPNDGHDHPEKKDPDTTPKQVAGVISSQDPPHPAKDVAEERAR). Basic and acidic residues-rich tracts occupy residues 9 to 21 (DGHD…DPDT) and 37 to 48 (HPAKDVAEERAR).

This sequence belongs to the acyl-CoA oxidase family. Requires FAD as cofactor.

Its subcellular location is the peroxisome. It catalyses the reaction a 2,3-saturated acyl-CoA + O2 = a (2E)-enoyl-CoA + H2O2. The protein operates within lipid metabolism; peroxisomal fatty acid beta-oxidation. This Candida tropicalis (Yeast) protein is Acyl-coenzyme A oxidase 2 (POX2).